The chain runs to 267 residues: Orotidine 5'-phosphate decarboxylase (267 aa).

Residues Asp-40, 62-64 (KTH), 93-102 (DRKFADIGNT), Tyr-215, and Arg-234 contribute to the substrate site. The active-site Proton donor is the Lys-95.

This sequence belongs to the OMP decarboxylase family.

The enzyme catalyses orotidine 5'-phosphate + H(+) = UMP + CO2. Its pathway is pyrimidine metabolism; UMP biosynthesis via de novo pathway; UMP from orotate: step 2/2. The protein is Orotidine 5'-phosphate decarboxylase (pyrG) of Phycomyces blakesleeanus (strain ATCC 8743b / DSM 1359 / FGSC 10004 / NBRC 33097 / NRRL 1555).